The sequence spans 292 residues: NAD kinase (292 aa).

Catalysis depends on aspartate 73, which acts as the Proton acceptor. NAD(+) is bound by residues 73–74, 147–148, histidine 158, arginine 175, aspartate 177, 188–193, and glutamine 247; these read DG, NE, and TAYSLS.

The protein belongs to the NAD kinase family. The cofactor is a divalent metal cation.

The protein resides in the cytoplasm. The enzyme catalyses NAD(+) + ATP = ADP + NADP(+) + H(+). Functionally, involved in the regulation of the intracellular balance of NAD and NADP, and is a key enzyme in the biosynthesis of NADP. Catalyzes specifically the phosphorylation on 2'-hydroxyl of the adenosine moiety of NAD to yield NADP. The chain is NAD kinase from Salmonella dublin (strain CT_02021853).